Reading from the N-terminus, the 231-residue chain is L-ribulose-5-phosphate 4-epimerase (231 aa).

Substrate-binding positions include 27–28, 44–45, and 74–75; these read GN, SG, and SS. Residues D76, H95, and H97 each coordinate Zn(2+). Catalysis depends on D120, which acts as the Proton donor/acceptor. H171 contributes to the Zn(2+) binding site. The active-site Proton donor/acceptor is the Y229.

It belongs to the aldolase class II family. AraD/FucA subfamily. In terms of assembly, homotetramer. It depends on Zn(2+) as a cofactor.

It carries out the reaction L-ribulose 5-phosphate = D-xylulose 5-phosphate. It functions in the pathway carbohydrate degradation; L-arabinose degradation via L-ribulose; D-xylulose 5-phosphate from L-arabinose (bacterial route): step 3/3. Functionally, involved in the degradation of L-arabinose. Catalyzes the interconversion of L-ribulose 5-phosphate (LRu5P) and D-xylulose 5-phosphate (D-Xu5P) via a retroaldol/aldol mechanism (carbon-carbon bond cleavage analogous to a class II aldolase reaction). This is L-ribulose-5-phosphate 4-epimerase from Salmonella typhimurium (strain LT2 / SGSC1412 / ATCC 700720).